We begin with the raw amino-acid sequence, 410 residues long: TNF receptor-associated factor family protein DDB_G0279745 (410 aa).

The RING-type; degenerate zinc finger occupies Cys-27 to Arg-67. 2 consecutive TRAF-type zinc fingers follow at residues Tyr-81–Gln-154 and Gln-154–Ile-213. A coiled-coil region spans residues Leu-216–Ala-284.

The protein belongs to the TNF receptor-associated factor family.

It localises to the cytoplasm. Probable adapter protein and signal transducer that links members of the tumor necrosis factor receptor family to different signaling pathways by association with the receptor cytoplasmic domain and kinases. In Dictyostelium discoideum (Social amoeba), this protein is TNF receptor-associated factor family protein DDB_G0279745.